The chain runs to 541 residues: Arginine-containing cyclodipeptide synthase avaA (541 aa).

A Conserved DDXXE motif motif is present at residues 428–432 (DDIAE).

It belongs to the arginine-containing cyclodipeptide synthase family.

The catalysed reaction is L-tryptophyl-tRNA(Trp) + L-arginyl-tRNA(Arg) = cyclo(L-arginyl-L-tryptophyl) + tRNA(Trp) + tRNA(Arg) + H(+). Its pathway is secondary metabolite biosynthesis. Functionally, arginine-containing cyclodipeptide synthase; part of the cluster that mediates the biosynthesis of a highly modified cyclo-arginine-tryptophan dipeptide (cRW). Within the pathway, avaA acts as the scaffold-generating enzyme and is responsible for formation of the cyclo-Arg-Trp diketopiperazine (cRW) from L-arginyl-tRNA(Arg) + L-tryptophanyl-tRNA(Trp). AvaB then acts as a multifunctional flavoenzyme that is responsible for generating the cyclo-Arg-formylkynurenine DKP, which can be deformylated by avaC. AvaB then catalyzes an additional N-oxidation followed by cyclization and dehydration. The next step is an N-acetylation of the guanidine group catalyzed by the arginine N-acetyltransferase AvaD. The role of the additional enzymes identified within the ava cluster still have to be determined. The polypeptide is Arginine-containing cyclodipeptide synthase avaA (Aspergillus versicolor).